Reading from the N-terminus, the 670-residue chain is Serine/threonine-rich protein adg2 (670 aa).

A signal peptide spans Met1–Gly19. 17 N-linked (GlcNAc...) asparagine glycosylation sites follow: Asn77, Asn159, Asn204, Asn224, Asn274, Asn297, Asn327, Asn351, Asn370, Asn381, Asn405, Asn424, Asn435, Asn459, Asn478, Asn489, and Asn513. The interval Gly526–Ser651 is disordered.

Its subcellular location is the secreted. The protein localises to the endoplasmic reticulum. The protein is Serine/threonine-rich protein adg2 (adg2) of Schizosaccharomyces pombe (strain 972 / ATCC 24843) (Fission yeast).